The chain runs to 438 residues: Xylose isomerase (438 aa).

Catalysis depends on residues H100 and D103. 7 residues coordinate Mg(2+): E231, E267, H270, D295, D306, D308, and D338.

The protein belongs to the xylose isomerase family. Homotetramer. The cofactor is Mg(2+).

The protein resides in the cytoplasm. It catalyses the reaction alpha-D-xylose = alpha-D-xylulofuranose. The chain is Xylose isomerase from Pseudomonas fluorescens (strain Pf0-1).